We begin with the raw amino-acid sequence, 171 residues long: Voltage-dependent P/Q-type calcium channel subunit alpha-1A (171 aa).

Residues 1-11 form a helical membrane-spanning segment; that stretch reads FVTVLGSITDI. The stretch at 1-171 is one IV repeat; the sequence is FVTVLGSITD…LMLNLFVAVI (171 aa). Residues 12-18 lie on the Extracellular side of the membrane; sequence LVTEFGN. Residues 19–37 traverse the membrane as a helical segment; sequence NFINLSFLRLFRAARLIKL. Residues 38-56 are Cytoplasmic-facing; it reads LRQGYTIRILLWTFVQSFK. Residues 57–76 traverse the membrane as a helical segment; that stretch reads ALPYVCLLIAMLFFIYAIIG. Residues 77-143 lie on the Extracellular side of the membrane; the sequence is MQVFGNIGIE…ENSGIKEDEC (67 aa). A helical transmembrane segment spans residues 144–168; that stretch reads GNEFAYFYFVSFIFLCSFLMLNLFV. Topologically, residues 169–171 are cytoplasmic; sequence AVI.

It belongs to the calcium channel alpha-1 subunit (TC 1.A.1.11) family. CACNA1A subfamily. As to quaternary structure, voltage-dependent calcium channels are multisubunit complexes, consisting of alpha-1, alpha-2, beta and delta subunits in a 1:1:1:1 ratio. The channel activity is directed by the pore-forming and voltage-sensitive alpha-1 subunit. In many cases, this subunit is sufficient to generate voltage-sensitive calcium channel activity. The auxiliary subunits beta and alpha-2/delta linked by a disulfide bridge regulate the channel activity.

Its subcellular location is the cell membrane. The catalysed reaction is Ca(2+)(in) = Ca(2+)(out). In terms of biological role, the isoform alpha-1A gives rise to P and/or Q-type calcium currents. P/Q-type calcium channels belong to the 'high-voltage activated' (HVA) group. This Gallus gallus (Chicken) protein is Voltage-dependent P/Q-type calcium channel subunit alpha-1A (CACNA1A).